We begin with the raw amino-acid sequence, 134 residues long: Glycine cleavage system H protein (134 aa).

Residues 24 to 106 form the Lipoyl-binding domain; that stretch reads TVRVGITDYA…YGAGWLLDIQ (83 aa). Lys65 is subject to N6-lipoyllysine.

It belongs to the GcvH family. The glycine cleavage system is composed of four proteins: P, T, L and H. (R)-lipoate serves as cofactor.

In terms of biological role, the glycine cleavage system catalyzes the degradation of glycine. The H protein shuttles the methylamine group of glycine from the P protein to the T protein. This is Glycine cleavage system H protein from Mycobacterium tuberculosis (strain ATCC 25177 / H37Ra).